The following is a 455-amino-acid chain: Kynurenine 3-monooxygenase (455 aa).

A run of 2 helical transmembrane segments spans residues Trp-393 to Tyr-416 and Leu-429 to Arg-453.

The protein belongs to the aromatic-ring hydroxylase family. KMO subfamily. FAD serves as cofactor.

The protein localises to the mitochondrion. The protein resides in the membrane. It carries out the reaction L-kynurenine + NADPH + O2 + H(+) = 3-hydroxy-L-kynurenine + NADP(+) + H2O. It functions in the pathway cofactor biosynthesis; NAD(+) biosynthesis; quinolinate from L-kynurenine: step 1/3. Its function is as follows. Catalyzes the hydroxylation of L-kynurenine (L-Kyn) to form 3-hydroxy-L-kynurenine (L-3OHKyn). Required for synthesis of quinolinic acid. The polypeptide is Kynurenine 3-monooxygenase (Drosophila willistoni (Fruit fly)).